A 566-amino-acid chain; its full sequence is Potassium-transporting ATPase potassium-binding subunit (566 aa).

A run of 12 helical transmembrane segments spans residues 6–26, 60–80, 128–148, 167–187, 247–267, 276–296, 331–351, 361–381, 383–403, 423–443, 492–512, and 530–550; these read VALL…LGIA, AAAI…LMLF, LGLT…AFVL, IWRI…LFLA, LTNF…CICF, VGSA…LLIM, FGLW…CGAV, LGGL…GGVG, GWYG…LMIG, IGLL…VILP, LMFV…GALI, and LFVG…FIPA.

Belongs to the KdpA family. As to quaternary structure, the system is composed of three essential subunits: KdpA, KdpB and KdpC.

The protein resides in the cell inner membrane. Part of the high-affinity ATP-driven potassium transport (or Kdp) system, which catalyzes the hydrolysis of ATP coupled with the electrogenic transport of potassium into the cytoplasm. This subunit binds the periplasmic potassium ions and delivers the ions to the membrane domain of KdpB through an intramembrane tunnel. This chain is Potassium-transporting ATPase potassium-binding subunit, found in Tolumonas auensis (strain DSM 9187 / NBRC 110442 / TA 4).